The chain runs to 308 residues: Ribosomal RNA small subunit methyltransferase H (308 aa).

Residues 31–33 (GGH), D51, F75, D97, and Q104 each bind S-adenosyl-L-methionine.

Belongs to the methyltransferase superfamily. RsmH family.

The protein localises to the cytoplasm. It carries out the reaction cytidine(1402) in 16S rRNA + S-adenosyl-L-methionine = N(4)-methylcytidine(1402) in 16S rRNA + S-adenosyl-L-homocysteine + H(+). Specifically methylates the N4 position of cytidine in position 1402 (C1402) of 16S rRNA. The polypeptide is Ribosomal RNA small subunit methyltransferase H (Tolumonas auensis (strain DSM 9187 / NBRC 110442 / TA 4)).